The chain runs to 151 residues: uncharacterized protein (151 aa).

The tract at residues 1–48 (MRMAPTESTEGRRLWPGPREGGSGKETTSEKLSNLPRPHSYSPKRADA) is disordered.

This is an uncharacterized protein from Homo sapiens (Human).